We begin with the raw amino-acid sequence, 701 residues long: Peptide transporter 3 (701 aa).

9 helical membrane-spanning segments follow: residues 29 to 49 (FSFY…HEFS), 55 to 75 (FIYH…SIMA), 91 to 111 (IYVV…SYPI), 119 to 139 (GLFV…AFAA), 154 to 174 (FSFF…ITPI), 188 to 208 (FPLA…LFLM), 269 to 289 (GLLN…LFDQ), 318 to 338 (INPV…YPAL), and 351 to 371 (AVGG…QLKV). N-linked (GlcNAc...) asparagine glycans are attached at residues asparagine 391 and asparagine 432. 3 helical membrane passes run 575–595 (ILWS…LSVT), 611–631 (VLTA…MMIS), and 641–661 (LEFF…ILLA).

This sequence belongs to the major facilitator superfamily. Proton-dependent oligopeptide transporter (POT/PTR) (TC 2.A.17) family. As to expression, expressed in the AVA interneuron.

It is found in the membrane. Its function is as follows. Neuron-specific, H(+)-coupled oligopeptide transporter with broad specificity towards di- and tripeptides in a Na(+) and Cl(-)-independent manner. Shows H(+) channel activity in the absence of peptide substrates. The protein is Peptide transporter 3 (pept-3) of Caenorhabditis elegans.